Consider the following 291-residue polypeptide: MKKIRIGSRDSKLAIIQSELIMSAIRKYDPDIELELITMKTTGDKILDKTLDKIEGKGLFVKELDNALYNNEVDITVHSYKDMPLEENPELPVVALSKREDPRDAFILPQNGENGEPIGSSSLRRQLQLKELFPGCKTAPIRGNVQTRLKKLDSGEFSAIVLAAAGIKRLGLESRIGRYFSVDEILPAASQGIIAVQGRVGENFDFLKLFHSEESLCISLAERTFVREMNGGCSTPIAAYATIQGSEIILKGLYCNETTGELRKECVSGNRNNPVELGYELVKKMKSSKSI.

At Cys233 the chain carries S-(dipyrrolylmethanemethyl)cysteine.

Belongs to the HMBS family. In terms of assembly, monomer. Requires dipyrromethane as cofactor.

The enzyme catalyses 4 porphobilinogen + H2O = hydroxymethylbilane + 4 NH4(+). Its pathway is porphyrin-containing compound metabolism; protoporphyrin-IX biosynthesis; coproporphyrinogen-III from 5-aminolevulinate: step 2/4. Its function is as follows. Tetrapolymerization of the monopyrrole PBG into the hydroxymethylbilane pre-uroporphyrinogen in several discrete steps. In Ruminiclostridium josui (Clostridium josui), this protein is Porphobilinogen deaminase (hemC).